Reading from the N-terminus, the 925-residue chain is Probable disease resistance protein At1g61310 (925 aa).

Residues 25 to 69 (GKSYIRTLEKNLRALQREMEDLRATQHEVQNKVAREESRHQQRLE) adopt a coiled-coil conformation. The segment at 134–154 (NFDEVSQPPPRSEVEERPTQP) is disordered. The region spanning 139–442 (SQPPPRSEVE…CEGFIGEDQV (304 aa)) is the NB-ARC domain. Residue 181–188 (GMGGVGKT) participates in ATP binding. 6 LRR repeats span residues 525 to 546 (AVRRMSLMRNEIEEITCESKCS), 547 to 568 (ELTTLFLQSNQLKNLSGEFIRY), 571 to 594 (KLVVLDLSDNRDFNELPEQISGLV), 595 to 617 (SLQYLDLSFTRIEQLPVGLKELK), 618 to 640 (KLTFLDLAYTARLCSISGISRLL), and 641 to 663 (SLRVLSLLGSKVHGDASVLKELQ).

It belongs to the disease resistance NB-LRR family.

In terms of biological role, probable disease resistance protein. The chain is Probable disease resistance protein At1g61310 from Arabidopsis thaliana (Mouse-ear cress).